The sequence spans 251 residues: Hydroxyacylglutathione hydrolase (251 aa).

Residues His53, His55, Asp57, His58, His110, Asp127, and His165 each coordinate Zn(2+).

It belongs to the metallo-beta-lactamase superfamily. Glyoxalase II family. Monomer. The cofactor is Zn(2+).

The enzyme catalyses an S-(2-hydroxyacyl)glutathione + H2O = a 2-hydroxy carboxylate + glutathione + H(+). It functions in the pathway secondary metabolite metabolism; methylglyoxal degradation; (R)-lactate from methylglyoxal: step 2/2. In terms of biological role, thiolesterase that catalyzes the hydrolysis of S-D-lactoyl-glutathione to form glutathione and D-lactic acid. This Blochmanniella pennsylvanica (strain BPEN) protein is Hydroxyacylglutathione hydrolase.